We begin with the raw amino-acid sequence, 401 residues long: Voltage-gated potassium channel subunit beta-3 (401 aa).

Composition is skewed to polar residues over residues 1–14 and 32–41; these read MQVSFACTEQTLRS and GVSMAQTKQR. Residues 1-49 are disordered; that stretch reads MQVSFACTEQTLRSRTSEDRLCPSRPSGGQNGVSMAQTKQRTPPMGAKN. NADP(+)-binding residues include Thr-90, Trp-91, Gln-97, and Asp-119. The active-site Proton donor/acceptor is the Tyr-124. Residues Asn-192, Ser-222, Arg-223, Gln-248, Trp-277, Ser-278, Pro-279, Leu-280, Ala-281, Cys-282, Lys-288, Arg-298, Gly-357, Ser-359, Gln-363, Glu-366, and Asn-367 each coordinate NADP(+).

This sequence belongs to the shaker potassium channel beta subunit family. Forms heteromultimeric complex with alpha subunits. Identified in potassium channel complexes containing KCNA1 and KCNA2.

The protein resides in the cytoplasm. Functionally, regulatory subunit of the voltage-gated potassium (Kv) channels composed of pore-forming and potassium-conducting alpha subunits and of regulatory beta subunit. The beta-3/KCNAB3 subunit may mediate closure of potassium channels. Increases and accelerates inactivation of Kv1.1/KCNA1 and Kv2.2/KCNA2 subunit-containing channels. May display nicotinamide adenine dinucleotide phosphate (NADPH)-dependent aldoketoreductase activity. The binding of oxidized and reduced NADP(H) cofactors may be required for the regulation of potassium channel activity. In Xenopus laevis (African clawed frog), this protein is Voltage-gated potassium channel subunit beta-3 (kcnab3).